The chain runs to 53 residues: uncharacterized protein (53 aa).

The disordered stretch occupies residues 34-53 (RKEKGKRHAAPLSLMGVHKR).

This is an uncharacterized protein from Treponema pallidum (strain Nichols).